Consider the following 802-residue polypeptide: Pyrophosphate-energized membrane proton pump 3 (802 aa).

6 helical membrane passes run 41 to 61, 66 to 86, 118 to 138, 160 to 180, 206 to 226, and 246 to 266; these read LNVRALSVLLLLSFGGIFYMG, PIIVFVFVVCIISFMLSVYLT, YGTISKMAFLLAFVILCIYLF, VAAFLLGALCSGIAGYVGMWV, AGGFSALVVVGMAVIGIAILY, and LPLLLVGYGFGASFVALFAQL. Lys-273 is a substrate binding site. Mg(2+)-binding residues include Asp-276, Asp-280, and Asp-306. The next 5 membrane-spanning stretches (helical) occupy residues 348-368, 386-406, 421-441, 468-491, and 511-531; these read FILFPLVVHSFDLVISSIGIL, MVVLQKGYSLTIILAVLTFGA, WLNFFMCGLVGIITAYVFVWI, IIAGVSLGLESTALPVLVISVAII, and GGLFGTAVATMGMLSTAAYVL. Mg(2+) contacts are provided by Asp-541 and Asn-568. The next 4 helical transmembrane spans lie at 577-597, 615-635, 686-706, and 716-736; these read FAIGSAALASFLLFSAYMDEV, VFIGGLLGAMLIFLFSAWACA, GALAIISPIAVGFVFRILGYY, and VVAAMLMFATVCGILMALFLN. The Mg(2+) site is built by Asp-743 and Asp-773. Lys-776 lines the substrate pocket. A helical membrane pass occupies residues 782-802; it reads SIHVLIKMLATITLVMAPIFL.

Belongs to the H(+)-translocating pyrophosphatase (TC 3.A.10) family. K(+)-insensitive subfamily. In terms of assembly, monomer.

Its subcellular location is the golgi apparatus membrane. It catalyses the reaction diphosphate + H2O + H(+)(in) = 2 phosphate + 2 H(+)(out). This is Pyrophosphate-energized membrane proton pump 3 (AVPL2) from Arabidopsis thaliana (Mouse-ear cress).